The primary structure comprises 123 residues: Small ribosomal subunit protein uS12 (123 aa).

The tract at residues 1-32 (MPTIQQLVRKGRKTKVSKNKTPALKGSPQRRG) is disordered. Positions 9-18 (RKGRKTKVSK) are enriched in basic residues. Aspartate 89 bears the 3-methylthioaspartic acid mark.

It belongs to the universal ribosomal protein uS12 family. As to quaternary structure, part of the 30S ribosomal subunit. Contacts proteins S8 and S17. May interact with IF1 in the 30S initiation complex.

Functionally, with S4 and S5 plays an important role in translational accuracy. Its function is as follows. Interacts with and stabilizes bases of the 16S rRNA that are involved in tRNA selection in the A site and with the mRNA backbone. Located at the interface of the 30S and 50S subunits, it traverses the body of the 30S subunit contacting proteins on the other side and probably holding the rRNA structure together. The combined cluster of proteins S8, S12 and S17 appears to hold together the shoulder and platform of the 30S subunit. This chain is Small ribosomal subunit protein uS12, found in Thermobifida fusca (strain YX).